Here is a 360-residue protein sequence, read N- to C-terminus: DNA replication and repair protein RecF (360 aa).

30-37 (GQNGSGKT) contributes to the ATP binding site.

This sequence belongs to the RecF family.

Its subcellular location is the cytoplasm. Its function is as follows. The RecF protein is involved in DNA metabolism; it is required for DNA replication and normal SOS inducibility. RecF binds preferentially to single-stranded, linear DNA. It also seems to bind ATP. The protein is DNA replication and repair protein RecF of Shewanella sp. (strain W3-18-1).